Consider the following 189-residue polypeptide: Elongation factor P (189 aa).

N6-(3,6-diaminohexanoyl)-5-hydroxylysine is present on Lys34.

Belongs to the elongation factor P family. Post-translationally, may be beta-lysylated on the epsilon-amino group of Lys-34 by the combined action of EpmA and EpmB, and then hydroxylated on the C5 position of the same residue by EpmC (if this protein is present). Lysylation is critical for the stimulatory effect of EF-P on peptide-bond formation. The lysylation moiety may extend toward the peptidyltransferase center and stabilize the terminal 3-CCA end of the tRNA. Hydroxylation of the C5 position on Lys-34 may allow additional potential stabilizing hydrogen-bond interactions with the P-tRNA.

The protein resides in the cytoplasm. It participates in protein biosynthesis; polypeptide chain elongation. Involved in peptide bond synthesis. Alleviates ribosome stalling that occurs when 3 or more consecutive Pro residues or the sequence PPG is present in a protein, possibly by augmenting the peptidyl transferase activity of the ribosome. Modification of Lys-34 is required for alleviation. The polypeptide is Elongation factor P (Francisella philomiragia subsp. philomiragia (strain ATCC 25017 / CCUG 19701 / FSC 153 / O#319-036)).